The sequence spans 156 residues: Cytochrome c-type biogenesis protein CcmE 1 (156 aa).

Topologically, residues 1 to 8 (MNATRRQR) are cytoplasmic. A helical; Signal-anchor for type II membrane protein transmembrane segment spans residues 9–29 (LWWVICVLTAAALAVTLIVFA). At 30–156 (LQRNMSYLFT…ATATPLTAPR (127 aa)) the chain is on the periplasmic side. Heme is bound by residues His123 and Tyr127. Residues 137-156 (AEGHAGKPIPATATPLTAPR) form a disordered region. A compositionally biased stretch (low complexity) spans 146-156 (PATATPLTAPR).

The protein belongs to the CcmE/CycJ family.

It is found in the cell inner membrane. Heme chaperone required for the biogenesis of c-type cytochromes. Transiently binds heme delivered by CcmC and transfers the heme to apo-cytochromes in a process facilitated by CcmF and CcmH. This Xanthomonas euvesicatoria pv. vesicatoria (strain 85-10) (Xanthomonas campestris pv. vesicatoria) protein is Cytochrome c-type biogenesis protein CcmE 1.